The primary structure comprises 64 residues: Small ribosomal subunit protein bS18c (64 aa).

It belongs to the bacterial ribosomal protein bS18 family. In terms of assembly, part of the 30S ribosomal subunit.

It localises to the plastid. The protein localises to the chloroplast. This is Small ribosomal subunit protein bS18c (rps18) from Bigelowiella natans (Pedinomonas minutissima).